Reading from the N-terminus, the 119-residue chain is uncharacterized protein (119 aa).

Transmembrane regions (helical) follow at residues 19–39 (FYPSFPFYLSFPFCPSFPSFL) and 68–88 (FPWFLPLLQLVYLCYKVPWLL).

The protein resides in the membrane. This is an uncharacterized protein from Saccharomyces cerevisiae (strain ATCC 204508 / S288c) (Baker's yeast).